We begin with the raw amino-acid sequence, 308 residues long: Methionyl-tRNA formyltransferase (308 aa).

110–113 serves as a coordination point for (6S)-5,6,7,8-tetrahydrofolate; it reads SLLP.

This sequence belongs to the Fmt family.

The enzyme catalyses L-methionyl-tRNA(fMet) + (6R)-10-formyltetrahydrofolate = N-formyl-L-methionyl-tRNA(fMet) + (6S)-5,6,7,8-tetrahydrofolate + H(+). Its function is as follows. Attaches a formyl group to the free amino group of methionyl-tRNA(fMet). The formyl group appears to play a dual role in the initiator identity of N-formylmethionyl-tRNA by promoting its recognition by IF2 and preventing the misappropriation of this tRNA by the elongation apparatus. The polypeptide is Methionyl-tRNA formyltransferase (Neisseria meningitidis serogroup A / serotype 4A (strain DSM 15465 / Z2491)).